The chain runs to 635 residues: DNA topoisomerase 4 subunit B (635 aa).

ATP contacts are provided by residues tyrosine 5, asparagine 45, aspartate 72, 113–119 (GLHGVGA), and lysine 340. The region spanning 422–537 (RELFVVEGDS…KGHIYLALPP (116 aa)) is the Toprim domain. Positions 428, 502, and 504 each coordinate Mg(2+).

Belongs to the type II topoisomerase family. ParE type 2 subfamily. In terms of assembly, heterotetramer composed of ParC and ParE. Mg(2+) is required as a cofactor. It depends on Mn(2+) as a cofactor. Requires Ca(2+) as cofactor.

The enzyme catalyses ATP-dependent breakage, passage and rejoining of double-stranded DNA.. Topoisomerase IV is essential for chromosome segregation. It relaxes supercoiled DNA. Performs the decatenation events required during the replication of a circular DNA molecule. The sequence is that of DNA topoisomerase 4 subunit B from Mycoplasma pneumoniae (strain ATCC 29342 / M129 / Subtype 1) (Mycoplasmoides pneumoniae).